A 369-amino-acid chain; its full sequence is Probable serine/threonine-protein kinase FMP48 (369 aa).

The Protein kinase domain occupies 2-369 (YTKLRSIQSG…EKPCLIQDGK (368 aa)). Residues 8-16 (IQSGTFSTV) and lysine 31 contribute to the ATP site. Aspartate 133 serves as the catalytic Proton acceptor.

It belongs to the protein kinase superfamily. Ser/Thr protein kinase family.

The protein localises to the mitochondrion. The enzyme catalyses L-seryl-[protein] + ATP = O-phospho-L-seryl-[protein] + ADP + H(+). The catalysed reaction is L-threonyl-[protein] + ATP = O-phospho-L-threonyl-[protein] + ADP + H(+). This chain is Probable serine/threonine-protein kinase FMP48 (FMP48), found in Saccharomyces cerevisiae (strain ATCC 204508 / S288c) (Baker's yeast).